The sequence spans 279 residues: MKKFAVFGNPIAQSLSPTIHQMFADQVGEKISYEKILAPEDGFVEAAKAFLAQEGAVGCNVTMPFKLDAFNLAKVDDQAAKDAQAVNTLMNGDRGELLGFNTDGVGLVNDLLNSGVKIKDKHVLLIGAGGAARGVISPLLKAGAATLTIANRTKAKAEEVASAASNPKVDVVALEDIATIAPHIIINSTAASLSNALPCSLNDGVLQHCEVVYDMVYKNSPTRFMRDAAELGVKTQIDGLGMLVEQAAEAFYIWTQKRPDTSDIVKRVRDIVEQSEKRN.

Residues 14 to 16 and Thr-62 each bind shikimate; that span reads SLS. Catalysis depends on Lys-66, which acts as the Proton acceptor. Shikimate contacts are provided by Asn-87 and Asp-103. NADP(+)-binding positions include 127–131, 151–156, and Met-215; these read GAGGA and NRTKAK. Tyr-217 contacts shikimate. Gly-239 contributes to the NADP(+) binding site.

The protein belongs to the shikimate dehydrogenase family. Homodimer.

It catalyses the reaction shikimate + NADP(+) = 3-dehydroshikimate + NADPH + H(+). It functions in the pathway metabolic intermediate biosynthesis; chorismate biosynthesis; chorismate from D-erythrose 4-phosphate and phosphoenolpyruvate: step 4/7. In terms of biological role, involved in the biosynthesis of the chorismate, which leads to the biosynthesis of aromatic amino acids. Catalyzes the reversible NADPH linked reduction of 3-dehydroshikimate (DHSA) to yield shikimate (SA). In Alteromonas mediterranea (strain DSM 17117 / CIP 110805 / LMG 28347 / Deep ecotype), this protein is Shikimate dehydrogenase (NADP(+)).